We begin with the raw amino-acid sequence, 251 residues long: MSSIDKKELAKFEKISHNWWNKDGEFGLLHRINPIRLEYIIEKITAHYNRHLSKLEILDVGCGGGLIAMPLAAQGFNVTAIDALQSNIETASTYAKENNVKINYLQSTIEELESDKLYDVVICIEVIEHVGNVQQFILNLVKHIKPNGMAIISTINRTKKAYALGIIVAEYILGWVPKNTHDYTKFLKPSEIYEMLTDTDIEIKELKGLVYDPAKNEWKLSDDIDVNYFMCLGSKNAKSINVIPALAGMTS.

S-adenosyl-L-methionine-binding residues include Arg36, Gly61, Asp82, and Ile124.

Belongs to the methyltransferase superfamily. UbiG/COQ3 family.

The catalysed reaction is a 3-demethylubiquinol + S-adenosyl-L-methionine = a ubiquinol + S-adenosyl-L-homocysteine + H(+). It carries out the reaction a 3-(all-trans-polyprenyl)benzene-1,2-diol + S-adenosyl-L-methionine = a 2-methoxy-6-(all-trans-polyprenyl)phenol + S-adenosyl-L-homocysteine + H(+). It functions in the pathway cofactor biosynthesis; ubiquinone biosynthesis. In terms of biological role, O-methyltransferase that catalyzes the 2 O-methylation steps in the ubiquinone biosynthetic pathway. This Rickettsia akari (strain Hartford) protein is Ubiquinone biosynthesis O-methyltransferase.